The following is a 363-amino-acid chain: Peptide chain release factor 2 (363 aa).

Gln-251 carries the N5-methylglutamine modification.

This sequence belongs to the prokaryotic/mitochondrial release factor family. In terms of processing, methylated by PrmC. Methylation increases the termination efficiency of RF2.

It localises to the cytoplasm. Peptide chain release factor 2 directs the termination of translation in response to the peptide chain termination codons UGA and UAA. This is Peptide chain release factor 2 from Helicobacter pylori (strain Shi470).